A 201-amino-acid chain; its full sequence is Beta-lactamase inhibitory protein (201 aa).

Residues 1-36 form the signal peptide; it reads MRTVGIGAGVRRLGRAVVMAAAVGGLVLGSAGASNA. Repeat copies occupy residues 37-112 and 116-201. Intrachain disulfides connect cysteine 66–cysteine 78 and cysteine 145–cysteine 167.

Interacts with E.coli beta-lactamase TEM-1; interaction inhibits hydrolysis of beta-lactam antibiotics. Interacts with K.pneumoniae beta-lactamase SHV-1. Interacts with K.pneumoniae beta-lactamases KPC-2 and KPC-3; interaction inhibits hydrolysis of beta-lactam antibiotics. Interacts with E.coli beta-lactamases CTX-M-14 and CTX-M-15; interaction inhibits hydrolysis of beta-lactam antibiotics.

Its subcellular location is the secreted. In terms of biological role, inhibits a wide variety of beta lactamases. The polypeptide is Beta-lactamase inhibitory protein (Streptomyces clavuligerus).